A 147-amino-acid polypeptide reads, in one-letter code: Heavy metal-dependent transcription regulator 2 (147 aa).

The region spanning 1–69 (MNIGEASKTS…VEQIKELLAL (69 aa)) is the HTH merR-type domain. A DNA-binding region (H-T-H motif) is located at residues 3–22 (IGEASKTSGVSSKMIRYYEQ).

Its subcellular location is the cytoplasm. Transcriptional regulator involved in acid tolerance. Binds copper. This Rhizobium meliloti (strain 1021) (Ensifer meliloti) protein is Heavy metal-dependent transcription regulator 2 (hmrR2).